A 160-amino-acid polypeptide reads, in one-letter code: Cytochrome b6-f complex subunit 4 (160 aa).

The next 3 membrane-spanning stretches (helical) occupy residues 36-56 (LLYI…GLAV), 95-115 (LLGV…PFLE), and 131-151 (TVFL…TLPI).

This sequence belongs to the cytochrome b family. PetD subfamily. In terms of assembly, the 4 large subunits of the cytochrome b6-f complex are cytochrome b6, subunit IV (17 kDa polypeptide, petD), cytochrome f and the Rieske protein, while the 4 small subunits are petG, petL, petM and petN. The complex functions as a dimer.

The protein localises to the plastid. It is found in the chloroplast thylakoid membrane. Its function is as follows. Component of the cytochrome b6-f complex, which mediates electron transfer between photosystem II (PSII) and photosystem I (PSI), cyclic electron flow around PSI, and state transitions. This is Cytochrome b6-f complex subunit 4 from Sorghum bicolor (Sorghum).